A 93-amino-acid chain; its full sequence is NAD(P)H-quinone oxidoreductase subunit 4L, chloroplastic (93 aa).

The next 2 helical transmembrane spans lie at Met1–Ile21 and Ile60–Ala80.

This sequence belongs to the complex I subunit 4L family. As to quaternary structure, NDH is composed of at least 16 different subunits, 5 of which are encoded in the nucleus.

It is found in the plastid. Its subcellular location is the chloroplast thylakoid membrane. It catalyses the reaction a plastoquinone + NADH + (n+1) H(+)(in) = a plastoquinol + NAD(+) + n H(+)(out). The enzyme catalyses a plastoquinone + NADPH + (n+1) H(+)(in) = a plastoquinol + NADP(+) + n H(+)(out). Its function is as follows. NDH shuttles electrons from NAD(P)H:plastoquinone, via FMN and iron-sulfur (Fe-S) centers, to quinones in the photosynthetic chain and possibly in a chloroplast respiratory chain. The immediate electron acceptor for the enzyme in this species is believed to be plastoquinone. Couples the redox reaction to proton translocation, and thus conserves the redox energy in a proton gradient. In Anthoceros angustus (Hornwort), this protein is NAD(P)H-quinone oxidoreductase subunit 4L, chloroplastic.